A 1495-amino-acid polypeptide reads, in one-letter code: MDSVTKKTRQDGSEVTERQGGSSSGLKTSSHTGGSGVEKRSYTHSSGYVTSSGSGRLNSSSSGYRQTQSPSSTLTKSPGSTFERKTYVNRHATYEGSSSANSSPEFPRKEFASASTRGRSQSRESEIRVRLQSASPSGRWTELDDVKRLLKGSRSASCSPTRSSSSTLPIPKKAVVETKMVTESSQSVSGTYDTTILNTTLPPYTWSSTLPAGSSLGGYHNSMGQSSSLINAMSHSTGSVFGVPNNLAPSSHALNTGLSTSSTVFGVQNNLSPSSSALNASAASAAYGMKNTSQTNTMNSTGVSASAGGTILSSQGDDFLHKDCKFLLLEKENAPAKKEMELLVMTKDSGKVFSASSTGLNGGSFAEDTLKKEKQGLSSYAADTGLKSDANGGLKSAPTRDKATYAEIQNGGAGGAIGSAPSWCPCGSCCSWWKWLLGLLLAWLLLLGLLFGLIALAEEVRKLKSRVDNLEKINHSFLTVNQGNPYLEKDVSKVDFLHGVAPSSTFPFENEESVWLMVKSRLNKEIERGYFRGERGEPGMKGDMGLQGPKGDRGLPGVPGIPGPVGHQGPEGPKGQKGSMGDPGMEGPMGQRGREGLPGPRGEPGPPGFGEKGDRGAAGPPGPPGPPGSAGLKGPMGSPGPQGPPGPPGLQGFRGEAGLPGAKGEKGATGPPGPKGDQGEKGARGMTGEQGSRGIPGPPGEPGAKGPAGQAGRDGQPGERGEPGLMGMPGARGPPGPSGDTGEPGLTGPQGPPGLPGNPGRPGAKGEPGAPGKVISAEGSSTIALPGPPGPPGPIGPTGPPGVPGPVGPAGLPGQQGPRGEKGSAGEVVIETIKTEVSSLASQMLSDLQGRAGPPGPPGPPGESVQGLPGPRGPPGLPGPSGPPGRPGSSVSTSETFVSGPPGPPGPPGPKGDQGEPGPRGFTGEPGEPGLPGFSSHGGTVTMQGPPGPPGPPGPKGDAGVPGAPGIPGTSRGGSRQIQGPPGPPGPPGPPGPGGSSSQEIQQYVADYLKSDNVRHYLTGVQGPPGPPGPPGILTTADGKNFDFAELATRVMSYVTSSSDHYQSFASSVSTTSVLYQELLNMLQREEIRQYLVGPRGPPGPPGPGVDGMSLSLDYDELTRRFISYLTSSGMSIGLPGPPGPPGTPGISYSELTAYLRNSEFSGLVGPPGPAGPPGPPGIPGSSGISLEDISAYLQSVGYSSISGIQGPPGPPGPPGPPGFSGTGLLSYADITHSDEFRSELIQYLKSDEVRSYISGPPGPPGPRGPPGPKGDSGLVAGSMSSLYHDSLASERLHGGSIGAEGSHGGSLGASSSYGSSMSSSMSSYSASMGSDGSYGASVGSDGSFDGLLTAEESHRRSAGPGRSYSSSFTGSLDYNELARHVSENLQSRGILQDLMSYTGQGPPGPPGPPGPPGISRVFAAYGNVTEDLMDFFRTHGTVRGPPGEKGERGYPGPKGDPGPMGPPGRHGQRGPKGEKGEKGEQMYSGRRRRRSVGV.

The span at Met-1–Glu-17 shows a compositional bias: basic and acidic residues. A disordered region spans residues Met-1–Gly-138. Residues Met-1–Trp-435 lie on the Cytoplasmic side of the membrane. The segment at Met-1–Arg-535 is nonhelical region (NC16). The span at Gln-19–Thr-32 shows a compositional bias: polar residues. Over residues Ser-51–Gly-63 the composition is skewed to low complexity. 2 stretches are compositionally biased toward polar residues: residues Tyr-64–Ser-80 and Glu-95–Pro-104. The chain crosses the membrane as a helical; Signal-anchor for type II membrane protein span at residues Leu-436 to Leu-456. Over Ala-457–Val-1495 the chain is Extracellular. 7 disordered regions span residues Arg-532–Ser-824, Asp-847–Gln-999, Glu-1160–Ile-1185, Ser-1201–Leu-1226, Arg-1251–Gly-1278, Gly-1295–Gly-1336, and Met-1396–Ser-1416. The tract at residues Gly-536–Gln-1482 is triple-helical region. 2 stretches are compositionally biased toward low complexity: residues Pro-702–Ala-711 and Arg-761–Lys-773. The segment covering Pro-786–Val-807 has biased composition (pro residues). Residues Pro-809–Pro-818 are compositionally biased toward low complexity. 7 stretches are compositionally biased toward pro residues: residues Pro-871 to Arg-886, Pro-901 to Pro-910, Pro-946 to Pro-955, Pro-981 to Pro-993, Pro-1167 to Ile-1179, Pro-1208 to Pro-1218, and Pro-1257 to Pro-1269. Positions Gly-1296–Leu-1308 are enriched in gly residues. Low complexity predominate over residues Gly-1309 to Gly-1336. Residues Pro-1403–Pro-1413 show a composition bias toward pro residues. Asn-1424 is a glycosylation site (N-linked (GlcNAc...) asparagine). The disordered stretch occupies residues Thr-1435–Val-1495. The segment covering Pro-1472–Glu-1481 has biased composition (basic and acidic residues). The tract at residues Met-1483–Val-1495 is nonhelical region (NC1). Over residues Gly-1486–Val-1495 the composition is skewed to basic residues.

Homotrimers of alpha 1(XVII)chains. The intracellular/endo domain is disulfide-linked. Post-translationally, prolines at the third position of the tripeptide repeating unit (G-X-Y) are hydroxylated in some or all of the chains. In terms of processing, the ectodomain is shedded from the surface of keratinocytes resulting in a 120-kDa soluble form, also named as 120 kDa linear IgA disease antigen homolog. The shedding is mediated by membrane-bound metalloproteases. As to expression, cornea specific.

It localises to the cell junction. The protein resides in the hemidesmosome. The protein localises to the membrane. Its subcellular location is the secreted. It is found in the extracellular space. It localises to the extracellular matrix. The protein resides in the basement membrane. Functionally, may play a role in the integrity of hemidesmosome and the attachment of basal keratinocytes to the underlying basement membrane. The 120 kDa linear IgA disease antigen homolog is an anchoring filament component involved in dermal-epidermal cohesion. This chain is Collagen alpha-1(XVII) chain (COL17A1), found in Gallus gallus (Chicken).